We begin with the raw amino-acid sequence, 138 residues long: Large ribosomal subunit protein uL16 (138 aa).

The span at 1-16 shows a compositional bias: basic residues; it reads MLIPRRVKHRKQHHPS. Residues 1-25 form a disordered region; sequence MLIPRRVKHRKQHHPSRSGAAKGGT.

Belongs to the universal ribosomal protein uL16 family. In terms of assembly, part of the 50S ribosomal subunit.

Functionally, binds 23S rRNA and is also seen to make contacts with the A and possibly P site tRNAs. In Rhodococcus erythropolis (strain PR4 / NBRC 100887), this protein is Large ribosomal subunit protein uL16.